Here is a 496-residue protein sequence, read N- to C-terminus: Guanosine-5'-triphosphate,3'-diphosphate pyrophosphatase (496 aa).

The protein belongs to the GppA/Ppx family. GppA subfamily.

The enzyme catalyses guanosine 3'-diphosphate 5'-triphosphate + H2O = guanosine 3',5'-bis(diphosphate) + phosphate + H(+). It participates in purine metabolism; ppGpp biosynthesis; ppGpp from GTP: step 2/2. Its function is as follows. Catalyzes the conversion of pppGpp to ppGpp. Guanosine pentaphosphate (pppGpp) is a cytoplasmic signaling molecule which together with ppGpp controls the 'stringent response', an adaptive process that allows bacteria to respond to amino acid starvation, resulting in the coordinated regulation of numerous cellular activities. This Aeromonas salmonicida (strain A449) protein is Guanosine-5'-triphosphate,3'-diphosphate pyrophosphatase.